The following is a 357-amino-acid chain: tRNA-specific 2-thiouridylase MnmA (357 aa).

Residues 7-14 and leucine 33 each bind ATP; that span reads GLSGGVDS. The active-site Nucleophile is cysteine 94. Cysteines 94 and 193 form a disulfide. Residue glycine 119 participates in ATP binding. An interaction with tRNA region spans residues 143–145; sequence KDQ. Cysteine 193 (cysteine persulfide intermediate) is an active-site residue. The interaction with tRNA stretch occupies residues 298–299; it reads RY.

It belongs to the MnmA/TRMU family.

It is found in the cytoplasm. It carries out the reaction S-sulfanyl-L-cysteinyl-[protein] + uridine(34) in tRNA + AH2 + ATP = 2-thiouridine(34) in tRNA + L-cysteinyl-[protein] + A + AMP + diphosphate + H(+). Its function is as follows. Catalyzes the 2-thiolation of uridine at the wobble position (U34) of tRNA, leading to the formation of s(2)U34. This Synechococcus sp. (strain ATCC 27144 / PCC 6301 / SAUG 1402/1) (Anacystis nidulans) protein is tRNA-specific 2-thiouridylase MnmA.